Here is a 220-residue protein sequence, read N- to C-terminus: Uracil-DNA glycosylase (220 aa).

The Proton acceptor role is filled by D60.

The protein belongs to the uracil-DNA glycosylase (UDG) superfamily. UNG family.

It localises to the cytoplasm. It carries out the reaction Hydrolyzes single-stranded DNA or mismatched double-stranded DNA and polynucleotides, releasing free uracil.. In terms of biological role, excises uracil residues from the DNA which can arise as a result of misincorporation of dUMP residues by DNA polymerase or due to deamination of cytosine. The protein is Uracil-DNA glycosylase of Francisella tularensis subsp. novicida (strain U112).